The following is a 455-amino-acid chain: Bifunctional protein GlmU (455 aa).

The tract at residues 1-226 (MSLDIVILAA…AMEVQGANDR (226 aa)) is pyrophosphorylase. Residues 8–11 (LAAG), Lys22, Gln73, 78–79 (GT), 99–101 (YGD), Gly136, Glu151, Asn166, and Asn224 each bind UDP-N-acetyl-alpha-D-glucosamine. Asp101 is a Mg(2+) binding site. Position 224 (Asn224) interacts with Mg(2+). The linker stretch occupies residues 227–247 (KQLSELERHYQLREARRLMAG). Residues 248–455 (GVTLRDPARF…WKRPVKIRKD (208 aa)) form an N-acetyltransferase region. UDP-N-acetyl-alpha-D-glucosamine is bound by residues Arg330 and Lys348. His360 acts as the Proton acceptor in catalysis. Residues Tyr363 and Asn374 each coordinate UDP-N-acetyl-alpha-D-glucosamine. Acetyl-CoA is bound by residues Ala377, 383-384 (NY), Ser402, Ala420, and Arg437.

In the N-terminal section; belongs to the N-acetylglucosamine-1-phosphate uridyltransferase family. It in the C-terminal section; belongs to the transferase hexapeptide repeat family. In terms of assembly, homotrimer. The cofactor is Mg(2+).

Its subcellular location is the cytoplasm. The catalysed reaction is alpha-D-glucosamine 1-phosphate + acetyl-CoA = N-acetyl-alpha-D-glucosamine 1-phosphate + CoA + H(+). It carries out the reaction N-acetyl-alpha-D-glucosamine 1-phosphate + UTP + H(+) = UDP-N-acetyl-alpha-D-glucosamine + diphosphate. It participates in nucleotide-sugar biosynthesis; UDP-N-acetyl-alpha-D-glucosamine biosynthesis; N-acetyl-alpha-D-glucosamine 1-phosphate from alpha-D-glucosamine 6-phosphate (route II): step 2/2. The protein operates within nucleotide-sugar biosynthesis; UDP-N-acetyl-alpha-D-glucosamine biosynthesis; UDP-N-acetyl-alpha-D-glucosamine from N-acetyl-alpha-D-glucosamine 1-phosphate: step 1/1. Its pathway is bacterial outer membrane biogenesis; LPS lipid A biosynthesis. In terms of biological role, catalyzes the last two sequential reactions in the de novo biosynthetic pathway for UDP-N-acetylglucosamine (UDP-GlcNAc). The C-terminal domain catalyzes the transfer of acetyl group from acetyl coenzyme A to glucosamine-1-phosphate (GlcN-1-P) to produce N-acetylglucosamine-1-phosphate (GlcNAc-1-P), which is converted into UDP-GlcNAc by the transfer of uridine 5-monophosphate (from uridine 5-triphosphate), a reaction catalyzed by the N-terminal domain. The sequence is that of Bifunctional protein GlmU from Pseudomonas savastanoi pv. phaseolicola (strain 1448A / Race 6) (Pseudomonas syringae pv. phaseolicola (strain 1448A / Race 6)).